Reading from the N-terminus, the 90-residue chain is Small ribosomal subunit protein uS17 (90 aa).

The protein belongs to the universal ribosomal protein uS17 family. As to quaternary structure, part of the 30S ribosomal subunit.

In terms of biological role, one of the primary rRNA binding proteins, it binds specifically to the 5'-end of 16S ribosomal RNA. The chain is Small ribosomal subunit protein uS17 from Acidiphilium cryptum (strain JF-5).